A 314-amino-acid chain; its full sequence is MFQPAGHGQDWAMEGPRDGLKKERLVDDRHDSGLDSMKDEDYEQMVKELREIRLQPQEAPLAAEPWKQQLTEDGDSFLHLAIIHEEKTLTMEVIGQVKGDLAFLNFQNNLQQTPLHLAVITNQPGIAEALLKAGCDPELRDFRGNTPLHLACEQGCLASVAVLTQTCTPQHLHSVLQATNYNGHTCLHLASIHGYLGIVEHLVTLGADVNAQEPCNGRTALHLAVDLQNPDLVSLLLKCGADVNRVTYQGYSPYQLTWGRPSTRIQQQLGQLTLENLQTLPESEDEESYDTESEFTEDELPYDDCVFGGQRLTL.

Residues 1–39 form a disordered region; it reads MFQPAGHGQDWAMEGPRDGLKKERLVDDRHDSGLDSMKD. Residues 15–39 are compositionally biased toward basic and acidic residues; the sequence is GPRDGLKKERLVDDRHDSGLDSMKD. Residue Lys-21 forms a Glycyl lysine isopeptide (Lys-Gly) (interchain with G-Cter in SUMO); alternate linkage. Residue Lys-21 forms a Glycyl lysine isopeptide (Lys-Gly) (interchain with G-Cter in ubiquitin); alternate linkage. Residue Lys-22 forms a Glycyl lysine isopeptide (Lys-Gly) (interchain with G-Cter in ubiquitin) linkage. The Destruction motif motif lies at 30–36; it reads HDSGLDS. Residue Ser-32 is modified to Phosphoserine; by IKKA and IKKB. Ser-36 is modified (phosphoserine; by IKKA, IKKB, IKKE and TBK1). A Phosphotyrosine; by Tyr-kinases modification is found at Tyr-42. Residues 45-54 carry the Nuclear export signal motif; that stretch reads MVKELREIRL. The short motif at 110–120 is the Nuclear import signal element; that stretch reads LQQTPLHLAVI. 4 ANK repeats span residues 110-139, 143-172, 182-211, and 216-245; these read LQQT…DPEL, RGNT…PQHL, NGHT…DVNA, and NGRT…DVNR. A (3S)-3-hydroxyasparagine; by HIF1AN mark is found at Asn-210 and Asn-244. Ser-283 and Ser-288 each carry phosphoserine; by CK2. Residue Thr-291 is modified to Phosphothreonine; by CK2. The residue at position 293 (Ser-293) is a Phosphoserine; by CK2. Phosphothreonine is present on Thr-296.

It belongs to the NF-kappa-B inhibitor family. As to quaternary structure, interacts with RELA; the interaction requires the nuclear import signal. Part of a 70-90 kDa complex at least consisting of CHUK, IKBKB, NFKBIA, RELA, ELP1 and MAP3K14. Interacts with NKIRAS1 and NKIRAS2. Interacts with RWDD3; the interaction enhances sumoylation. Interacts with PRMT2. Interacts with PRKACA in platelets; this interaction is disrupted by thrombin and collagen. Interacts with MEFV. Interacts with DDRGK1; positively regulates NFKBIA phosphorylation and degradation. Interacts with HNRNPA2B1; the interaction may be mediated by the RRM2 domain of HNRNPA2B1, and HNRNPA2B1 may interact simultaneously with FAM76B and either NFKBIA or NFKBIE to form a complex. In terms of processing, phosphorylated at Ser-32 and Ser-36 by IKKA/CHUK and IKKB/IKBKB; disables inhibition of NF-kappa-B DNA-binding activity. Phosphorylation at positions 32 and 36 is prerequisite to recognition by the SCF(FBXW11) and SCF(BTRC) complexes, leading to polyubiquitination and subsequent degradation. Polyubiquitinated at Lys-21 and/or Lys-22 following phosphorylation at Ser-32 and Ser-36. Monoubiquitinated at Lys-21 and/or Lys-22 by UBE2D3. Ubiquitin chain elongation is then performed by CDC34 in cooperation with the SCF(FBXW11) E3 ligase complex, building ubiquitin chains from the UBE2D3-primed NFKBIA-linked ubiquitin. The resulting polyubiquitination leads to protein degradation. Also ubiquitinated by the SCF(BTRC) complex following stimulus-dependent phosphorylation at Ser-32 and Ser-36. Deubiquitinated by USP38, leading to NF-kappa-B inhibition. Post-translationally, sumoylated; sumoylation requires the presence of the nuclear import signal. Sumoylation blocks ubiquitination and proteasome-mediated degradation of the protein thereby increasing the protein stability. In terms of processing, hydroxylated by HIF1AN.

The protein localises to the cytoplasm. It is found in the nucleus. Inhibits the activity of dimeric NF-kappa-B/REL complexes by trapping REL (RELA/p65 and NFKB1/p50) dimers in the cytoplasm by masking their nuclear localization signals. On cellular stimulation by immune and pro-inflammatory responses, becomes phosphorylated promoting ubiquitination and degradation, enabling the dimeric RELA to translocate to the nucleus and activate transcription. The protein is NF-kappa-B inhibitor alpha (Nfkbia) of Rattus norvegicus (Rat).